We begin with the raw amino-acid sequence, 569 residues long: Synaptotagmin-4 (569 aa).

Residues 1–21 traverse the membrane as a helical segment; it reads MGFLFGLFIGIAVSFGLVVAF. The SMP-LTD domain occupies 67–251; that stretch reads QRQKLNWLNL…WPVRKIIPIL (185 aa). A phospholipid binding region spans residues 229 to 531; the sequence is EETIRDAIED…KIGRVIMTLT (303 aa). C2 domains follow at residues 245–366 and 426–543; these read RKII…DIWL and TDMK…QEWF. Residues aspartate 459, aspartate 465, aspartate 514, aspartate 516, and aspartate 521 each coordinate Ca(2+).

This sequence belongs to the synaptotagmin family. Ca(2+) serves as cofactor.

It localises to the membrane. Functionally, may be involved in membrane trafficking. The chain is Synaptotagmin-4 (SYT4) from Arabidopsis thaliana (Mouse-ear cress).